Here is a 908-residue protein sequence, read N- to C-terminus: Protein translocase subunit SecA (908 aa).

ATP is bound by residues glutamine 87, 105–109, and aspartate 512; that span reads GEGKT. The disordered stretch occupies residues 860-908; that stretch reads AESLVGSSDEHEAVTAQAPMIRDGEKVGRNDPCPCGSGRKYKQCHGKLS. Zn(2+) contacts are provided by cysteine 892, cysteine 894, cysteine 903, and histidine 904. Over residues 898 to 908 the composition is skewed to basic residues; it reads RKYKQCHGKLS.

This sequence belongs to the SecA family. As to quaternary structure, monomer and homodimer. Part of the essential Sec protein translocation apparatus which comprises SecA, SecYEG and auxiliary proteins SecDF-YajC and YidC. The cofactor is Zn(2+).

It is found in the cell inner membrane. Its subcellular location is the cytoplasm. It catalyses the reaction ATP + H2O + cellular proteinSide 1 = ADP + phosphate + cellular proteinSide 2.. Its function is as follows. Part of the Sec protein translocase complex. Interacts with the SecYEG preprotein conducting channel. Has a central role in coupling the hydrolysis of ATP to the transfer of proteins into and across the cell membrane, serving both as a receptor for the preprotein-SecB complex and as an ATP-driven molecular motor driving the stepwise translocation of polypeptide chains across the membrane. This chain is Protein translocase subunit SecA, found in Shewanella baltica (strain OS155 / ATCC BAA-1091).